We begin with the raw amino-acid sequence, 1390 residues long: Nuclear pore complex protein Nup155 (1390 aa).

O-linked (GlcNAc) serine glycosylation occurs at S525. The tract at residues G598–S632 is disordered. Residue K739 forms a Glycyl lysine isopeptide (Lys-Gly) (interchain with G-Cter in SUMO2) linkage. The disordered stretch occupies residues Q984–S1011. A Phosphoserine modification is found at S1056.

It belongs to the non-repetitive/WGA-negative nucleoporin family. As to quaternary structure, interacts with GLE1. Able to form a heterotrimer with GLE1 and NUP42 in vitro. Forms a complex with NUP35, NUP93, NUP205 and lamin B. Post-translationally, phosphorylated. Phosphorylation and dephosphorylation may be important for the function of NUP155 and may play a role in the reversible disassembly of the nuclear pore complex during mitosis. In terms of processing, disulfide-linked to NUP62. The inner channel of the NPC has a different redox environment from the cytoplasm and allows the formation of interchain disulfide bonds between some nucleoporins, the significant increase of these linkages upon oxidative stress reduces the permeability of the NPC.

Its subcellular location is the nucleus. It is found in the nuclear pore complex. It localises to the nucleus membrane. Essential component of nuclear pore complex. Could be essessential for embryogenesis. Nucleoporins may be involved both in binding and translocating proteins during nucleocytoplasmic transport. This is Nuclear pore complex protein Nup155 (Nup155) from Rattus norvegicus (Rat).